The sequence spans 926 residues: Protein transport protein SEC24-2 (926 aa).

Positions 1-54 (MSHHKKRVYPQAQAQYGQSATPLQQPAQLVPPQDPAAAGMSYAQMGMPPQGAAA) are disordered. Over residues 20-54 (ATPLQQPAQLVPPQDPAAAGMSYAQMGMPPQGAAA) the composition is skewed to low complexity. Positions 231, 234, 253, and 256 each coordinate Zn(2+). The segment at 231–256 (CRRCRSYMNPFITFIEQGRRWRCNFC) is zinc finger-like.

Belongs to the SEC23/SEC24 family. SEC24 subfamily. As to quaternary structure, the COPII coat is composed of at least 5 proteins: the SEC23/24 complex, the SEC13/31 complex, and the protein SAR1. Golgi apparatus membrane; Peripheral membrane protein; Cytoplasmic side.

The protein localises to the cytoplasm. It is found in the cytoplasmic vesicle. The protein resides in the COPII-coated vesicle membrane. It localises to the endoplasmic reticulum membrane. Its subcellular location is the golgi apparatus membrane. Its function is as follows. Component of the coat protein complex II (COPII) which promotes the formation of transport vesicles from the endoplasmic reticulum (ER). The coat has two main functions, the physical deformation of the endoplasmic reticulum membrane into vesicles and the selection of cargo molecules. This Saccharomyces uvarum (strain ATCC 76518 / CBS 7001 / CLIB 283 / NBRC 10550 / MCYC 623 / NCYC 2669 / NRRL Y-11845) (Yeast) protein is Protein transport protein SEC24-2 (SEC242).